We begin with the raw amino-acid sequence, 563 residues long: Alpha-keto-acid decarboxylase (563 aa).

Residue Glu59 participates in thiamine diphosphate binding. The tract at residues 348 to 367 is disordered; the sequence is SPPVASPPAEPLPPPPPREQ. The span at 351–366 shows a compositional bias: pro residues; it reads VASPPAEPLPPPPPRE. Residues 394 to 476 are thiamine pyrophosphate binding; it reads TSFYGMADHR…VVVNNDGYTV (83 aa). Residues Asp444, Asn471, and Gly473 each coordinate Mg(2+).

Belongs to the TPP enzyme family. It depends on a metal cation as a cofactor. The cofactor is thiamine diphosphate.

In terms of biological role, decarboxylates branched-chain and aromatic alpha-keto acids to aldehydes. The protein is Alpha-keto-acid decarboxylase (kdc) of Mycobacterium avium (strain 104).